We begin with the raw amino-acid sequence, 318 residues long: MSSLPGSREPLLRVAVTGGTHGNEMCGVYLARYWLQNPGELQRPSFSAMPVLANPAATAACCRYLDRDLNRSCTLTFLGSTATPDDPYEVKRARELNQLLGPKGTGQAFDFTLDLHNTTANTGVCLISESNISFNLHLCHYLQRQNPGMPCRLFLYEPAGTETFSVESISKNGICLEMGPQPQGVLRADLFSRMRALVASILDFIELFNQGMDLPAFEMDIYRNLGSVDFPRTADGDLAGTVHPQLQDHDFEPLRPGEPIFKLFSGEDVLYEGDSIVYPVFINEAAYYEKHVAFLKSEKIRVTVPALLRLTPRSTQTP.

Residues 1-210 (MSSLPGSREP…ILDFIELFNQ (210 aa)) are hydrolytic domain. The Zn(2+) site is built by His-21 and Glu-24. Substrate is bound by residues Arg-63 and 70 to 71 (NR). His-116 provides a ligand contact to Zn(2+). Positions 177 and 287 each coordinate substrate. Residues 211–318 (GMDLPAFEMD…RLTPRSTQTP (108 aa)) form a shielding domain region. Thr-317 carries the post-translational modification Phosphothreonine.

This sequence belongs to the AspA/AstE family. Aspartoacylase subfamily. Exists as a mixture of homodimers and homotetramer, both catalytically active. Zn(2+) is required as a cofactor. Expressed predominantly in kidney and to a lesser extent in liver. Weakly expressed in heart, small intestine, brain, lung, testis, and stomach.

It localises to the apical cell membrane. The protein resides in the cytoplasm. The catalysed reaction is an N-acyl-aromatic L-alpha-amino acid + H2O = an aromatic L-alpha-amino acid + a carboxylate. The enzyme catalyses an N-acetyl-L-cysteine-S-conjugate + H2O = an S-substituted L-cysteine + acetate. Functionally, plays an important role in deacetylating mercapturic acids in kidney proximal tubules. Also acts on N-acetyl-aromatic amino acids. In Mus musculus (Mouse), this protein is N-acyl-aromatic-L-amino acid amidohydrolase (carboxylate-forming) (Acy3).